Reading from the N-terminus, the 63-residue chain is U2-agatoxin-Ao1v (63 aa).

An N-terminal signal peptide occupies residues 1-14 (LLLISAMVGSMIAA). Positions 15-28 (VPEEESLQLSEDER) are excised as a propeptide. Cystine bridges form between cysteine 31-cysteine 47, cysteine 38-cysteine 52, and cysteine 46-cysteine 62.

This sequence belongs to the neurotoxin 01 (U2-agtx) family. In terms of tissue distribution, expressed by the venom gland.

The protein resides in the secreted. In terms of biological role, insect active toxin causing rapid but reversible paralysis in crickets. No activity shown in mammals. Does not show effect on mammalian voltage-gated calcium channels. In Agelena orientalis (Funnel-web spider), this protein is U2-agatoxin-Ao1v.